The primary structure comprises 233 residues: Putative nosiheptide resistance regulatory protein (233 aa).

Positions 93–112 form a DNA-binding region, H-T-H motif; the sequence is RKAARQAADYSRPMIEQAVA. The segment at 190-233 is disordered; the sequence is PPEATEVPESGRLTSVDGSAEAVLDPEVQAKEAAEEAAKRDDQA. Residues 217-233 show a composition bias toward basic and acidic residues; that stretch reads VQAKEAAEEAAKRDDQA.

In terms of biological role, seems to be involved in the regulation of nhs expression. This chain is Putative nosiheptide resistance regulatory protein, found in Streptomyces actuosus.